The sequence spans 417 residues: UDP-N-acetylglucosamine 1-carboxyvinyltransferase (417 aa).

A phosphoenolpyruvate-binding site is contributed by 22-23; the sequence is KN. Arg93 lines the UDP-N-acetyl-alpha-D-glucosamine pocket. Cys117 acts as the Proton donor in catalysis. A 2-(S-cysteinyl)pyruvic acid O-phosphothioketal modification is found at Cys117. UDP-N-acetyl-alpha-D-glucosamine-binding positions include 122–126, Asp305, and Ile327; that span reads RPVDQ.

It belongs to the EPSP synthase family. MurA subfamily.

It is found in the cytoplasm. It catalyses the reaction phosphoenolpyruvate + UDP-N-acetyl-alpha-D-glucosamine = UDP-N-acetyl-3-O-(1-carboxyvinyl)-alpha-D-glucosamine + phosphate. It functions in the pathway cell wall biogenesis; peptidoglycan biosynthesis. Its function is as follows. Cell wall formation. Adds enolpyruvyl to UDP-N-acetylglucosamine. This is UDP-N-acetylglucosamine 1-carboxyvinyltransferase from Nitrosomonas europaea (strain ATCC 19718 / CIP 103999 / KCTC 2705 / NBRC 14298).